We begin with the raw amino-acid sequence, 193 residues long: MNFLAHLHLAHLADSSLSGNLLADFVRGNPATHYPPDVVEGIYMHRRIDVMTDNLPEVREAREWFRHETRRVAPITLDVMWDHFLSRHWTQISPDFPLQAFVGYAHAQVATILPDSPPRFVNLNDYLWSEKWLERYRDMDFIQNVLNGMANRRPRLDALRDSWYDLDAHYDALEERFWHFYPRMMAQAARKAL.

Belongs to the AcpH family.

The enzyme catalyses holo-[ACP] + H2O = apo-[ACP] + (R)-4'-phosphopantetheine + H(+). In terms of biological role, converts holo-ACP to apo-ACP by hydrolytic cleavage of the phosphopantetheine prosthetic group from ACP. This chain is Acyl carrier protein phosphodiesterase, found in Salmonella choleraesuis (strain SC-B67).